The primary structure comprises 70 residues: Large ribosomal subunit protein bL31 (70 aa).

Zn(2+)-binding residues include Cys-16, Cys-18, Cys-38, and Cys-41.

Belongs to the bacterial ribosomal protein bL31 family. Type A subfamily. As to quaternary structure, part of the 50S ribosomal subunit. It depends on Zn(2+) as a cofactor.

In terms of biological role, binds the 23S rRNA. The sequence is that of Large ribosomal subunit protein bL31 from Bifidobacterium adolescentis (strain ATCC 15703 / DSM 20083 / NCTC 11814 / E194a).